The sequence spans 270 residues: Phosphatidylglycerol--prolipoprotein diacylglyceryl transferase (270 aa).

4 helical membrane passes run 18 to 38 (IAVHWYGIIIGLGALLGLWLA), 55 to 75 (LVLFAIPIAILCARAYYVIFQ), 89 to 109 (IWNGGLAIHGGLIGAVLTGII), and 115 to 135 (GLSFWKLADIAAPSILLGQAI). R137 contributes to the a 1,2-diacyl-sn-glycero-3-phospho-(1'-sn-glycerol) binding site. 3 helical membrane passes run 177–197 (QPTFLYESLWSFTGVVVLLLL), 205–225 (GELFLIYVIWYSMGRYFIEGL), and 236–256 (LRIAQVISIVLILCAAALIAY).

Belongs to the Lgt family.

It localises to the cell membrane. The enzyme catalyses L-cysteinyl-[prolipoprotein] + a 1,2-diacyl-sn-glycero-3-phospho-(1'-sn-glycerol) = an S-1,2-diacyl-sn-glyceryl-L-cysteinyl-[prolipoprotein] + sn-glycerol 1-phosphate + H(+). The protein operates within protein modification; lipoprotein biosynthesis (diacylglyceryl transfer). Functionally, catalyzes the transfer of the diacylglyceryl group from phosphatidylglycerol to the sulfhydryl group of the N-terminal cysteine of a prolipoprotein, the first step in the formation of mature lipoproteins. The chain is Phosphatidylglycerol--prolipoprotein diacylglyceryl transferase from Bacillus licheniformis (strain ATCC 14580 / DSM 13 / JCM 2505 / CCUG 7422 / NBRC 12200 / NCIMB 9375 / NCTC 10341 / NRRL NRS-1264 / Gibson 46).